The following is a 414-amino-acid chain: 2-epi-5-epi-valiolone synthase (414 aa).

Residues D70, 101–104 (ESAK), 134–138 (GVLTD), 158–159 (TT), K171, K180, and 198–201 (FLAT) contribute to the NAD(+) site. K171 is an active-site residue. E213, H284, and H300 together coordinate Zn(2+).

Belongs to the sugar phosphate cyclases superfamily. EEVS family. It depends on NAD(+) as a cofactor. Zn(2+) serves as cofactor.

The enzyme catalyses D-sedoheptulose 7-phosphate = 2-epi-5-epi-valiolone + phosphate. Its pathway is antibiotic biosynthesis. In terms of biological role, catalyzes the cyclization of D-sedoheptulose 7-phosphate to 2-epi-5-epi-valiolone. Involved in validamycin biosynthesis. In Streptomyces hygroscopicus subsp. jinggangensis (strain 5008), this protein is 2-epi-5-epi-valiolone synthase.